The primary structure comprises 336 residues: Eukaryotic translation initiation factor 3 subunit I (336 aa).

WD repeat units follow at residues 8–49 (GHER…GTYN), 50–91 (GHNG…KAWE), 93–135 (PTAI…GPQP), 144–183 (PIGS…EVAS), 187–226 (NHIG…VIKS), and 285–324 (GGFG…FRAK).

Belongs to the eIF-3 subunit I family. Component of the eukaryotic translation initiation factor 3 (eIF-3) complex.

It is found in the cytoplasm. Component of the eukaryotic translation initiation factor 3 (eIF-3) complex, which is involved in protein synthesis of a specialized repertoire of mRNAs and, together with other initiation factors, stimulates binding of mRNA and methionyl-tRNAi to the 40S ribosome. The eIF-3 complex specifically targets and initiates translation of a subset of mRNAs involved in cell proliferation. The chain is Eukaryotic translation initiation factor 3 subunit I from Puccinia graminis f. sp. tritici (strain CRL 75-36-700-3 / race SCCL) (Black stem rust fungus).